The sequence spans 259 residues: Large ribosomal subunit protein uL3m (259 aa).

The N-terminal 15 residues, 1 to 15 (MQSRFLISPTLIRTF), are a transit peptide targeting the mitochondrion. Residues 176 to 197 (ASHGASLSHRTPGSTGQNTTPS) are compositionally biased toward polar residues. The disordered stretch occupies residues 176 to 208 (ASHGASLSHRTPGSTGQNTTPSRVLPGRKMAGH).

This sequence belongs to the universal ribosomal protein uL3 family. As to quaternary structure, component of the mitochondrial large ribosomal subunit (mt-LSU). Mature yeast 74S mitochondrial ribosomes consist of a small (37S) and a large (54S) subunit. The 37S small subunit contains a 15S ribosomal RNA (15S mt-rRNA) and at least 32 different proteins. The 54S large subunit contains a 21S rRNA (21S mt-rRNA) and at least 45 different proteins.

The protein localises to the cytoplasm. The protein resides in the mitochondrion. Component of the mitochondrial ribosome (mitoribosome), a dedicated translation machinery responsible for the synthesis of mitochondrial genome-encoded proteins, including at least some of the essential transmembrane subunits of the mitochondrial respiratory chain. The mitoribosomes are attached to the mitochondrial inner membrane and translation products are cotranslationally integrated into the membrane. The chain is Large ribosomal subunit protein uL3m (mrpl9) from Schizosaccharomyces pombe (strain 972 / ATCC 24843) (Fission yeast).